Consider the following 301-residue polypeptide: Acidic endochitinase (301 aa).

The N-terminal stretch at 1–25 is a signal peptide; sequence MARTPQSTPLLISLSVLALLQTSYA. A GH18 domain is found at 26-301; that stretch reads GGIAIYWGQN…GYSSSIKSSV (276 aa). 2 cysteine pairs are disulfide-bonded: Cys45–Cys92 and Cys75–Cys82. Glu152 functions as the Proton donor in the catalytic mechanism. Cys187 and Cys216 form a disulfide bridge.

Belongs to the glycosyl hydrolase 18 family. Chitinase class II subfamily.

The enzyme catalyses Random endo-hydrolysis of N-acetyl-beta-D-glucosaminide (1-&gt;4)-beta-linkages in chitin and chitodextrins.. Functionally, defense against chitin containing fungal pathogens. In Vitis vinifera (Grape), this protein is Acidic endochitinase (CHIT3).